Reading from the N-terminus, the 582-residue chain is Putative frv operon regulatory protein (582 aa).

A DNA-binding region (H-T-H motif) is located at residues 20 to 39; it reads PGELAQQTGVSGRTILRDID. In terms of domain architecture, PTS EIIA type-2 spans 443–582; sequence RFFSAPGSFH…EAFMELLHKG (140 aa). A Phosphohistidine; by HPr modification is found at His505.

Functionally, could be involved in the regulation of the transcription of the FRV operon. The sequence is that of Putative frv operon regulatory protein (frvR) from Escherichia coli (strain K12).